The sequence spans 329 residues: Protein STRICTOSIDINE SYNTHASE-LIKE 11 (329 aa).

Residues 1-23 (MMRSFVSLISLLLLLSFSSSVLS) form the signal peptide. Asn-37 and Asn-79 each carry an N-linked (GlcNAc...) asparagine glycan.

The protein belongs to the strictosidine synthase family.

It is found in the vacuole. It catalyses the reaction 3alpha(S)-strictosidine + H2O = secologanin + tryptamine. Its pathway is alkaloid biosynthesis; 3alpha(S)-strictosidine biosynthesis; 3alpha(S)-strictosidine from secologanin and tryptamine: step 1/1. Catalyzes the stereospecific condensation of tryptamine with secologanin to form strictosidine, the key intermediate of indole alkaloid biosynthesis. This chain is Protein STRICTOSIDINE SYNTHASE-LIKE 11, found in Arabidopsis thaliana (Mouse-ear cress).